Reading from the N-terminus, the 95-residue chain is MALFGGSSSQAPASATDNKVQAFKQQIAQEIAVANATDLVNKVSENCFEKCLQSPYKDGNEGCVDQCLAKYMRSWNVISKTYINRIQDASTTGEI.

Positions 47–67 (CFEKCLQSPYKDGNEGCVDQC) match the Twin CX3C motif motif. Intrachain disulfides connect Cys-47/Cys-67 and Cys-51/Cys-63.

This sequence belongs to the small Tim family. Heterohexamer; composed of 3 copies of TIM8 and 3 copies of TIM13, named soluble 70 kDa complex. Associates with the TIM22 complex, whose core is composed of TIM22 and TIM54. Interacts with the transmembrane regions of multi-pass transmembrane proteins in transit.

Its subcellular location is the mitochondrion inner membrane. In terms of biological role, mitochondrial intermembrane chaperone that participates in the import and insertion of some multi-pass transmembrane proteins into the mitochondrial inner membrane. Also required for the transfer of beta-barrel precursors from the TOM complex to the sorting and assembly machinery (SAM complex) of the outer membrane. Acts as a chaperone-like protein that protects the hydrophobic precursors from aggregation and guide them through the mitochondrial intermembrane space. The TIM8-TIM13 complex is non essential and only mediates the import of few proteins, while the predominant TIM9-TIM10 70 kDa complex is crucial and mediates the import of much more proteins. The protein is Mitochondrial import inner membrane translocase subunit TIM13 (TIM13) of Candida glabrata (strain ATCC 2001 / BCRC 20586 / JCM 3761 / NBRC 0622 / NRRL Y-65 / CBS 138) (Yeast).